The chain runs to 163 residues: UPF0523 protein B (163 aa).

This sequence belongs to the UPF0523 family.

This Dictyostelium discoideum (Social amoeba) protein is UPF0523 protein B.